Here is a 105-residue protein sequence, read N- to C-terminus: ESAT-6-like protein EsxB (105 aa).

The tract at residues 1–23 is disordered; sequence MSQGFKTEADVMRNTAHRVDDTN. Residues 7–21 show a composition bias toward basic and acidic residues; it reads TEADVMRNTAHRVDD.

It belongs to the WXG100 family. CFP-10 subfamily. In terms of assembly, forms a tight 1:1 complex with EsxB.

The polypeptide is ESAT-6-like protein EsxB (Corynebacterium diphtheriae (strain ATCC 700971 / NCTC 13129 / Biotype gravis)).